Here is a 1460-residue protein sequence, read N- to C-terminus: DNA-directed RNA polymerase III subunit RPC1 (1460 aa).

Zn(2+) is bound by residues Cys67, Cys70, Cys77, His80, Cys107, Cys110, and Cys154. 3 residues coordinate Mg(2+): Asp511, Asp513, and Asp515. Residues 858–870 (PPEFLFHAISGRE) are bridging helix.

Belongs to the RNA polymerase beta' chain family. Component of the RNA polymerase III (Pol III) complex consisting of 17 subunits.

The protein localises to the nucleus. The enzyme catalyses RNA(n) + a ribonucleoside 5'-triphosphate = RNA(n+1) + diphosphate. DNA-dependent RNA polymerase catalyzes the transcription of DNA into RNA using the four ribonucleoside triphosphates as substrates. Largest and catalytic core component of RNA polymerase III which synthesizes small RNAs, such as 5S rRNA and tRNAs. Forms the polymerase active center together with the second largest subunit. A single-stranded DNA template strand of the promoter is positioned within the central active site cleft of Pol III. A bridging helix emanates from RPC1 and crosses the cleft near the catalytic site and is thought to promote translocation of Pol III by acting as a ratchet that moves the RNA-DNA hybrid through the active site by switching from straight to bent conformations at each step of nucleotide addition. The chain is DNA-directed RNA polymerase III subunit RPC1 (RPO31) from Saccharomyces cerevisiae (strain ATCC 204508 / S288c) (Baker's yeast).